A 318-amino-acid polypeptide reads, in one-letter code: V-set and immunoglobulin domain-containing protein 1 (318 aa).

Positions 1-19 (MSFLLFITLGLSLTALSHC) are cleaved as a signal peptide. The Ig-like V-type domain maps to 20-131 (VQVTIQNPII…SSGQGKILLT (112 aa)). The Extracellular portion of the chain corresponds to 20-233 (VQVTIQNPII…TGGEGGVIAA (214 aa)). 2 disulfides stabilise this stretch: C41-C114 and C157-C207. Residues 136–223 (PSVPHCSIRG…GNATCELNLH (88 aa)) enclose the Ig-like C2-type domain. Residues 234–254 (AVIGGLLAAAIIIAIVWFLVV) traverse the membrane as a helical segment. The Cytoplasmic portion of the chain corresponds to 255–318 (KRKQKKQLPP…ANGETEEPTA (64 aa)). The tract at residues 261 to 318 (QLPPTKEMKTGGNQYMAVSGEANEPPKENLGASEPTETIQFHDHAENAANGETEEPTA) is disordered.

In terms of tissue distribution, expressed in thymocytes.

The protein resides in the membrane. The sequence is that of V-set and immunoglobulin domain-containing protein 1 (vsig1) from Xenopus laevis (African clawed frog).